A 249-amino-acid chain; its full sequence is Nodulation protein H (249 aa).

In terms of biological role, required for the formation of sulfated nod factor. Proposed to transfer activated sulfate (PAPS) to a N-acetylglucosamine of the nod factor. The polypeptide is Nodulation protein H (nodH) (Rhizobium tropici).